Reading from the N-terminus, the 72-residue chain is MAKEDRIEMQGEVLENLPNATFRVKLENGHVVLGYISGKMRMHYIRILPGDKVTVEMTPYDLSRARIIFRAK.

The region spanning M1–K72 is the S1-like domain.

It belongs to the IF-1 family. In terms of assembly, component of the 30S ribosomal translation pre-initiation complex which assembles on the 30S ribosome in the order IF-2 and IF-3, IF-1 and N-formylmethionyl-tRNA(fMet); mRNA recruitment can occur at any time during PIC assembly.

The protein localises to the cytoplasm. Its function is as follows. One of the essential components for the initiation of protein synthesis. Stabilizes the binding of IF-2 and IF-3 on the 30S subunit to which N-formylmethionyl-tRNA(fMet) subsequently binds. Helps modulate mRNA selection, yielding the 30S pre-initiation complex (PIC). Upon addition of the 50S ribosomal subunit IF-1, IF-2 and IF-3 are released leaving the mature 70S translation initiation complex. The chain is Translation initiation factor IF-1 1 from Methylobacillus flagellatus (strain ATCC 51484 / DSM 6875 / VKM B-1610 / KT).